The chain runs to 656 residues: Threonine--tRNA ligase (656 aa).

A TGS domain is found at 1-63 (MAEIQLTFPD…LEDGAIEIIT (63 aa)). Residues 243-541 (DHRVIGNQLD…LTEIYKGAFP (299 aa)) are catalytic. Zn(2+) contacts are provided by Cys-337, His-388, and His-518.

The protein belongs to the class-II aminoacyl-tRNA synthetase family. As to quaternary structure, homodimer. It depends on Zn(2+) as a cofactor.

It localises to the cytoplasm. It catalyses the reaction tRNA(Thr) + L-threonine + ATP = L-threonyl-tRNA(Thr) + AMP + diphosphate + H(+). Its function is as follows. Catalyzes the attachment of threonine to tRNA(Thr) in a two-step reaction: L-threonine is first activated by ATP to form Thr-AMP and then transferred to the acceptor end of tRNA(Thr). Also edits incorrectly charged L-seryl-tRNA(Thr). This chain is Threonine--tRNA ligase, found in Latilactobacillus sakei subsp. sakei (strain 23K) (Lactobacillus sakei subsp. sakei).